Consider the following 155-residue polypeptide: UBA-like domain-containing protein 1 (155 aa).

Residues 81 to 155 (KASESFNSSS…KASAAMEAER (75 aa)) form a disordered region. Over residues 83 to 96 (SESFNSSSSPSMAT) the composition is skewed to low complexity. Positions 112-127 (ANQQSLWTQGPSAQQT) are enriched in polar residues. Residues 139–155 (QQAASEQKASAAMEAER) are compositionally biased toward low complexity.

It belongs to the UBALD family.

The chain is UBA-like domain-containing protein 1 (ubald1) from Danio rerio (Zebrafish).